The primary structure comprises 111 residues: uncharacterized protein (111 aa).

4 helical membrane passes run 4 to 21 (FITA…FVSF), 28 to 47 (LVYF…YMIY), 51 to 73 (TGIR…VTAF), and 80 to 102 (SFFF…YLGM).

The protein localises to the cell membrane. This is an uncharacterized protein from Bacillus subtilis (strain 168).